The primary structure comprises 234 residues: Opacity protein opA56 (234 aa).

Residue Ala1 is a signal peptide.

The protein belongs to the opacity porin family.

The protein resides in the cell outer membrane. In terms of biological role, implicated in a number of adherence functions. OPA proteins are implicated in pathogenesis and are subject to phase variation. The protein is Opacity protein opA56 (opaF) of Neisseria gonorrhoeae.